Here is a 122-residue protein sequence, read N- to C-terminus: Putative iron-sulfur cluster insertion protein ErpA (122 aa).

Residues cysteine 50, cysteine 114, and cysteine 116 each coordinate iron-sulfur cluster.

The protein belongs to the HesB/IscA family. In terms of assembly, homodimer. It depends on iron-sulfur cluster as a cofactor.

Functionally, required for insertion of 4Fe-4S clusters. This Burkholderia mallei (strain NCTC 10247) protein is Putative iron-sulfur cluster insertion protein ErpA.